We begin with the raw amino-acid sequence, 845 residues long: Protein SEY1 (845 aa).

Residues 1 to 29 (MELNVDSAKQLLAEHEQELQSAHDAHSIL) are a coiled coil. Residues 1 to 749 (MELNVDSAKQ…KRATVSSIAQ (749 aa)) are Cytoplasmic-facing. The GB1/RHD3-type G domain occupies 112 to 334 (GFGYDLCAVL…DPNFVFKTEY (223 aa)). Position 122–129 (122–129 (GSQSTGKS)) interacts with GTP. Residues 750–770 (VPLWMYGVMLVLGWNELMAIL) form a helical membrane-spanning segment. The Lumenal portion of the chain corresponds to 771 to 773 (SSP). A helical membrane pass occupies residues 774–794 (VYFAFLLVLIASAYIVWRLNL). Over 795-845 (SGPLISVLRAVANEVHRLADAQLRTHFSQPLREPRPPAESRPAEQIELEPN) the chain is Cytoplasmic. The disordered stretch occupies residues 823-845 (QPLREPRPPAESRPAEQIELEPN). A compositionally biased stretch (basic and acidic residues) spans 826–838 (REPRPPAESRPAE).

The protein belongs to the TRAFAC class dynamin-like GTPase superfamily. GB1/RHD3 GTPase family. RHD3 subfamily.

Its subcellular location is the endoplasmic reticulum membrane. Cooperates with the reticulon proteins and tubule-shaping DP1 family proteins to generate and maintain the structure of the tubular endoplasmic reticulum network. Has GTPase activity, which is required for its function in ER organization. The protein is Protein SEY1 of Mycosarcoma maydis (Corn smut fungus).